Reading from the N-terminus, the 425-residue chain is Nicotinate dehydrogenase large molybdopterin subunit (425 aa).

Se-Mo-molybdopterin cytosine dinucleotide contacts are provided by residues Gln-208 and 238–240; that span reads GFG.

The protein belongs to the xanthine dehydrogenase family. In terms of assembly, heterooctamer of NDHM, NDHL, NDHS and NDHF. Dimer of heterotetramers. The cofactor is Se-Mo-molybdopterin cytosine dinucleotide.

It carries out the reaction nicotinate + NADP(+) + H2O = 6-hydroxynicotinate + NADPH + H(+). The protein operates within cofactor degradation; nicotinate degradation; 6-hydroxynicotinate from nicotinate: step 1/1. Its activity is regulated as follows. Reversibly inactivated by selenide and sulfide. Not inhibited by cyanide. In terms of biological role, catalyzes the hydroxylation of nicotinate to 6-hydroxynicotinate. Also active against 2-pyrazinecarboxylic acid, but inactive against other nicotinate analogs. This Eubacterium barkeri (Clostridium barkeri) protein is Nicotinate dehydrogenase large molybdopterin subunit (ndhL).